Reading from the N-terminus, the 635-residue chain is Chaperone protein HtpG (635 aa).

The a; substrate-binding stretch occupies residues 1–336 (MTTAEAAAPE…SADLPLNLSR (336 aa)). The tract at residues 337–556 (EMLQDSAILA…ESGIDRRLEK (220 aa)) is b. The tract at residues 557-635 (LLASAGRLGD…RVMQRGLPTA (79 aa)) is c.

The protein belongs to the heat shock protein 90 family. As to quaternary structure, homodimer.

It localises to the cytoplasm. In terms of biological role, molecular chaperone. Has ATPase activity. In Azorhizobium caulinodans (strain ATCC 43989 / DSM 5975 / JCM 20966 / LMG 6465 / NBRC 14845 / NCIMB 13405 / ORS 571), this protein is Chaperone protein HtpG.